Consider the following 510-residue polypeptide: Histidine ammonia-lyase (510 aa).

Positions 143 to 145 form a cross-link, 5-imidazolinone (Ala-Gly); it reads ASG. At Ser-144 the chain carries 2,3-didehydroalanine (Ser).

It belongs to the PAL/histidase family. Post-translationally, contains an active site 4-methylidene-imidazol-5-one (MIO), which is formed autocatalytically by cyclization and dehydration of residues Ala-Ser-Gly.

The protein localises to the cytoplasm. The enzyme catalyses L-histidine = trans-urocanate + NH4(+). It functions in the pathway amino-acid degradation; L-histidine degradation into L-glutamate; N-formimidoyl-L-glutamate from L-histidine: step 1/3. In Yersinia pseudotuberculosis serotype I (strain IP32953), this protein is Histidine ammonia-lyase.